Here is a 237-residue protein sequence, read N- to C-terminus: Neurogenin-1 (237 aa).

The tract at residues 35–83 (LQQAASASGPPAPARRGAPNISRASEVPGAQDDEQERRRRRGRTRVRSE) is disordered. Positions 38-53 (AASASGPPAPARRGAP) are enriched in low complexity. Residues 92–144 (SRRVKANDRERNRMHNLNAALDALRSVLPSFPDDTKLTKIETLRFAYNYIWAL) form the bHLH domain. The disordered stretch occupies residues 175–209 (GPPSPASDAESWGSGAAAASPLSDPSSPAASEDFT). Over residues 180-207 (ASDAESWGSGAAAASPLSDPSSPAASED) the composition is skewed to low complexity.

As to quaternary structure, efficient DNA binding requires dimerization with another bHLH protein. In terms of tissue distribution, expression restricted to the embryonic nervous system.

The protein resides in the nucleus. In terms of biological role, acts as a transcriptional regulator. Involved in the initiation of neuronal differentiation. Activates transcription by binding to the E box (5'-CANNTG-3'). Associates with chromatin to enhancer regulatory elements in genes encoding key transcriptional regulators of neurogenesis. The protein is Neurogenin-1 (NEUROG1) of Homo sapiens (Human).